Reading from the N-terminus, the 546-residue chain is Nicotinic acid-CoA ligase olcI (546 aa).

194–205 serves as a coordination point for AMP; that stretch reads MFSTSGTSGLPK. Residues 445-523 are AMP-binding; sequence EIEAVLLKDP…ESLPRTGIGK (79 aa).

The protein belongs to the ATP-dependent AMP-binding enzyme family.

The catalysed reaction is nicotinate + ATP + CoA = nicotinyl-CoA + AMP + diphosphate. It participates in secondary metabolite biosynthesis; terpenoid biosynthesis. Its function is as follows. Nicotinic acid-CoA ligase; part of the gene cluster that mediates the biosynthesis of 15-deoxyoxalicine B. The first step of the pathway is the synthesis of nicotinyl-CoA from nicotinic acid by the nicotinic acid-CoA ligase olcI. Nicotinyl-CoA is then a substrate of polyketide synthase olcA to produce 4-hydroxy-6-(3-pyridinyl)-2H-pyran-2-one (HPPO) which is further prenylated by the polyprenyl transferase olcH to yield geranylgeranyl-HPPO. Geranylgeranyl pyrophosphate is provided by the cluster-specific geranylgeranyl pyrophosphate synthase olcC. The FAD-dependent monooxygenase olcE catalyzes the epoxidation of geranylgeranyl-HPPO and the terpene cyclase olcD catalyzes the cyclization of the terpenoid component, resulting in the formation of the tricyclic terpene moiety seen in predecaturin E. The cytochrome P450 monooxygenase then catalyzes the allylic oxidation of predecaturin E, which is followed by spirocylization with concomitant loss of one molecule of water to form decaturin E. Decaturin E is the substrate of the cytochrome P450 monooxygenase olcJ which hydroxylates it at the C-29 position to form decaturin F. The short-chain dehydrogenase/reductase olcF may catalyze the oxidation of decaturin F to generate the 29-hydroxyl-27-one intermediate, and subsequent hemiacetal formation probably leads to the formation of decaturin C. The dioxygenase olcK may be a peroxisomal enzyme that catalyzes the hydroxylation of decaturin C into decaturin A once decaturin C is shuttled into the peroxisome by the MFS transporter olcL. Finally the cytochrome P450 monooxygenase olcB catalyzes the oxidative rearrangement to yield 15-deoxyoxalicine B. In the absence of olcJ, decaturin E may be shunted to a pathway in which it is oxidized to a ketone, possibly by olcF, to form decaturin D, which undergoes further allylic oxidation to yield decaturin G. Moreover, in the absence of oclK or oclL, oclB can convert decaturin C into 15-deoxyoxalicine A. The chain is Nicotinic acid-CoA ligase olcI from Penicillium canescens.